The primary structure comprises 612 residues: Kelch repeat and BTB domain-containing protein 3 (612 aa).

Residues 52 to 119 (YDFKIIMKDE…AYTGKTKITD (68 aa)) enclose the BTB domain. One can recognise a BACK domain in the interval 154–254 (CLQLLSISDS…QLSEETLQDC (101 aa)). Kelch repeat units follow at residues 295 to 341 (KYIF…SSYG), 343 to 403 (KIFL…MALD), 404 to 454 (RLFV…TCQN), 456 to 506 (IYVL…KAVP), and 552 to 599 (KIYI…VIQF).

The sequence is that of Kelch repeat and BTB domain-containing protein 3 from Homo sapiens (Human).